A 305-amino-acid chain; its full sequence is Tyrosine recombinase XerC (305 aa).

The Core-binding (CB) domain occupies 4–95 (TSIQELINKW…AVKNFYKFLE (92 aa)). The 183-residue stretch at 116-298 (LLPKSLSEDD…SIKHLVSVYT (183 aa)) folds into the Tyr recombinase domain. Catalysis depends on residues arginine 159, lysine 182, histidine 250, arginine 253, and histidine 276. Catalysis depends on tyrosine 285, which acts as the O-(3'-phospho-DNA)-tyrosine intermediate.

It belongs to the 'phage' integrase family. XerC subfamily. In terms of assembly, forms a cyclic heterotetrameric complex composed of two molecules of XerC and two molecules of XerD.

The protein localises to the cytoplasm. Site-specific tyrosine recombinase, which acts by catalyzing the cutting and rejoining of the recombining DNA molecules. The XerC-XerD complex is essential to convert dimers of the bacterial chromosome into monomers to permit their segregation at cell division. It also contributes to the segregational stability of plasmids. In Rickettsia canadensis (strain McKiel), this protein is Tyrosine recombinase XerC.